The sequence spans 457 residues: Protein translocase subunit SecY (457 aa).

Residues 1–20 (MGVIDVLAAVGERFPAVRKP) lie on the Cytoplasmic side of the membrane. Residues 21–47 (ERKPTLYRRLAWTGVILVLYFIMSNIP) traverse the membrane as a helical segment. At 48-59 (LYGIPPQNIGGQ) the chain is on the extracellular side. Residues 60–67 (VDLQRIIF) constitute an intramembrane region (helical). The discontinuously helical transmembrane segment at 60–88 (VDLQRIIFASSAGTLMELGIGPIVTASLI) threads the bilayer. Residues 68 to 79 (ASSAGTLMELGI) lie within the membrane without spanning it. The segment at residues 80 to 88 (GPIVTASLI) is an intramembrane region (helical). The Cytoplasmic segment spans residues 89-109 (IQVLVGAKIIKLDLADPEGRR). Residues 110-134 (KFTSAQKVLALAFAALEAVAFTVGG) traverse the membrane as a helical segment. The Extracellular portion of the chain corresponds to 135–146 (RYWVGTAIEPGP). A helical membrane pass occupies residues 147 to 171 (LDYALVSLQLFLGALLVIYFDEVMQ). At 172-178 (KGWGIGS) the chain is on the cytoplasmic side. Residues 179–197 (AISLFILAGVAQGVVWSIF) form a helical membrane-spanning segment. Topologically, residues 198 to 229 (GTIPGVAQDYGLVPAIISNPDLTLLARPNGFP) are extracellular. A helical membrane pass occupies residues 230-251 (DLTGFFTTLAAIILLVYLQAMR). At 252–276 (VEIPITSERFKGIRSRVPLQFIYVT) the chain is on the cytoplasmic side. A helical membrane pass occupies residues 277 to 298 (NIPILLVGILVSDLLLVQRLLA). At 299-332 (DYLGVESRAYQIYSSIVYYLSPPRGVVQSIADPV) the chain is on the extracellular side. The helical transmembrane segment at 333 to 352 (KTAVFIASWTVLSIVFGYMW) threads the bilayer. Topologically, residues 353–395 (VEIAGLNPREQAERLIKGGLAIPGMRSDPRVLERVLRRYIYPL) are cytoplasmic. The chain crosses the membrane as a helical span at residues 396 to 414 (TFLSSLIVAALVIVADIFG). Residues 415–417 (AYG) are Extracellular-facing. Residues 418-432 (TGTGLLLAVGIINQY) form a helical membrane-spanning segment. Topologically, residues 433–457 (YAMITRERALETYPLLRRILGEEVV) are cytoplasmic.

It belongs to the SecY/SEC61-alpha family. Component of the Sec protein translocase complex. Heterotrimer consisting of alpha (SecY), beta (SecG) and gamma (SecE) subunits. The heterotrimers can form oligomers, although 1 heterotrimer is thought to be able to translocate proteins. Interacts with the ribosome. May interact with SecDF, and other proteins may be involved.

It localises to the cell membrane. Functionally, the central subunit of the protein translocation channel SecYEG. Consists of two halves formed by TMs 1-5 and 6-10. These two domains form a lateral gate at the front which open onto the bilayer between TMs 2 and 7, and are clamped together by SecE at the back. The channel is closed by both a pore ring composed of hydrophobic SecY resides and a short helix (helix 2A) on the extracellular side of the membrane which forms a plug. The plug probably moves laterally to allow the channel to open. The ring and the pore may move independently. In Aeropyrum pernix (strain ATCC 700893 / DSM 11879 / JCM 9820 / NBRC 100138 / K1), this protein is Protein translocase subunit SecY.